The chain runs to 71 residues: Beta-defensin 124 (71 aa).

The N-terminal stretch at 1–22 (MTQLLLFLVALLVLGHVPSGRS) is a signal peptide. 3 disulfide bridges follow: Cys27-Cys54, Cys34-Cys48, and Cys38-Cys55.

The protein belongs to the beta-defensin family.

The protein resides in the secreted. Has antibacterial activity. The protein is Beta-defensin 124 (DEFB124) of Pan troglodytes (Chimpanzee).